A 216-amino-acid polypeptide reads, in one-letter code: 3-isopropylmalate dehydratase small subunit (216 aa).

It belongs to the LeuD family. LeuD type 1 subfamily. Heterodimer of LeuC and LeuD.

It catalyses the reaction (2R,3S)-3-isopropylmalate = (2S)-2-isopropylmalate. It functions in the pathway amino-acid biosynthesis; L-leucine biosynthesis; L-leucine from 3-methyl-2-oxobutanoate: step 2/4. Its function is as follows. Catalyzes the isomerization between 2-isopropylmalate and 3-isopropylmalate, via the formation of 2-isopropylmaleate. The chain is 3-isopropylmalate dehydratase small subunit from Burkholderia mallei (strain NCTC 10247).